Reading from the N-terminus, the 183-residue chain is Hypoxanthine-guanine-xanthine phosphoribosyltransferase (183 aa).

Residues 102–110 (EDIIDTGLT), Lys134, and Asp163 contribute to the GMP site. Asp106 acts as the Proton acceptor in catalysis. Asp163 contacts Mg(2+).

Homodimer. The cofactor is Mg(2+).

The protein resides in the cytoplasm. The catalysed reaction is IMP + diphosphate = hypoxanthine + 5-phospho-alpha-D-ribose 1-diphosphate. The enzyme catalyses GMP + diphosphate = guanine + 5-phospho-alpha-D-ribose 1-diphosphate. It carries out the reaction XMP + diphosphate = xanthine + 5-phospho-alpha-D-ribose 1-diphosphate. It functions in the pathway purine metabolism; GMP biosynthesis via salvage pathway; GMP from guanine: step 1/1. It participates in purine metabolism; IMP biosynthesis via salvage pathway; IMP from hypoxanthine: step 1/1. The protein operates within purine metabolism; XMP biosynthesis via salvage pathway; XMP from xanthine: step 1/1. Its function is as follows. Essential in nucleic acid metabolism of T.foetus because the parasite is unable to synthesize purine nucleotides de novo and relies on the HGXPRTase activities for its purine requirements by salvaging purine bases from the host. Works with guanine, hypoxanthine and xanthine. The polypeptide is Hypoxanthine-guanine-xanthine phosphoribosyltransferase (HPT) (Tritrichomonas foetus (Trichomonas foetus)).